Reading from the N-terminus, the 285-residue chain is Ribosomal RNA small subunit methyltransferase A (285 aa).

S-adenosyl-L-methionine-binding residues include asparagine 21, leucine 23, glycine 48, glutamate 69, aspartate 94, and asparagine 127.

The protein belongs to the class I-like SAM-binding methyltransferase superfamily. rRNA adenine N(6)-methyltransferase family. RsmA subfamily.

It is found in the cytoplasm. The enzyme catalyses adenosine(1518)/adenosine(1519) in 16S rRNA + 4 S-adenosyl-L-methionine = N(6)-dimethyladenosine(1518)/N(6)-dimethyladenosine(1519) in 16S rRNA + 4 S-adenosyl-L-homocysteine + 4 H(+). Functionally, specifically dimethylates two adjacent adenosines (A1518 and A1519) in the loop of a conserved hairpin near the 3'-end of 16S rRNA in the 30S particle. May play a critical role in biogenesis of 30S subunits. The polypeptide is Ribosomal RNA small subunit methyltransferase A (Koribacter versatilis (strain Ellin345)).